The chain runs to 267 residues: Ribonuclease HII (267 aa).

An RNase H type-2 domain is found at 57–245 (WPVAGCDEVG…VVAARERHRA (189 aa)). The a divalent metal cation site is built by aspartate 63, glutamate 64, and aspartate 154.

This sequence belongs to the RNase HII family. Requires Mn(2+) as cofactor. It depends on Mg(2+) as a cofactor.

The protein localises to the cytoplasm. The enzyme catalyses Endonucleolytic cleavage to 5'-phosphomonoester.. Functionally, endonuclease that specifically degrades the RNA of RNA-DNA hybrids. This is Ribonuclease HII from Nitrobacter hamburgensis (strain DSM 10229 / NCIMB 13809 / X14).